The following is a 258-amino-acid chain: Transcription factor TT2 (258 aa).

2 HTH myb-type domains span residues Arg11 to Leu63 and Arg64 to Leu118. 2 consecutive DNA-binding regions (H-T-H motif) follow at residues Trp39 to Leu63 and Trp91 to Leu114. Gly47–Ser54 provides a ligand contact to ATP.

Interacts with BHLH2/EGL3/MYC146, BHLH12/MYC1 and BHLH42/TT8. Expressed at a high level in immature siliques and at a lower level in flowers. Undetected in young seedlings, roots, leaves and inflorescence stems.

The protein localises to the nucleus. Transcription activator, when associated with BHLH2/EGL3/MYC146, BHLH12/MYC1, or BHLH42/TT8. Involved in the control of flavonoid late metabolism in developing siliques. Plays a key role in determining the tissue-specific activation of leucoanthocyanidin reductase (BANYULS). The polypeptide is Transcription factor TT2 (TT2) (Arabidopsis thaliana (Mouse-ear cress)).